A 235-amino-acid chain; its full sequence is Ribonuclease 3 (235 aa).

An RNase III domain is found at 6–131 (IDQLKKLTGH…LIAVIYLDGG (126 aa)). E44 lines the Mg(2+) pocket. The active site involves D48. Residues D117 and E120 each contribute to the Mg(2+) site. E120 is a catalytic residue. Residues 156–225 (DAKTELQEWA…AEKILRREGM (70 aa)) enclose the DRBM domain.

It belongs to the ribonuclease III family. As to quaternary structure, homodimer. It depends on Mg(2+) as a cofactor.

The protein localises to the cytoplasm. The catalysed reaction is Endonucleolytic cleavage to 5'-phosphomonoester.. Its function is as follows. Digests double-stranded RNA. Involved in the processing of primary rRNA transcript to yield the immediate precursors to the large and small rRNAs (23S and 16S). Processes some mRNAs, and tRNAs when they are encoded in the rRNA operon. Processes pre-crRNA and tracrRNA of type II CRISPR loci if present in the organism. In Bartonella bacilliformis (strain ATCC 35685 / KC583 / Herrer 020/F12,63), this protein is Ribonuclease 3.